Consider the following 1154-residue polypeptide: PDZ domain-containing protein 8 (1154 aa).

A helical transmembrane segment spans residues 2 to 24 (GLLLMILASAVLGSFLTLLAQFF). The disordered stretch occupies residues 66–90 (DEEPSGAAPEGGATPTAAPETPAPP). The span at 70–85 (SGAAPEGGATPTAAPE) shows a compositional bias: low complexity. An SMP-LTD domain is found at 91-294 (TRETCYFLNA…LPNYKIRFKP (204 aa)). In terms of domain architecture, PDZ spans 366–449 (TVELIKGNLQ…RVLVYYERPV (84 aa)). Phosphoserine occurs at positions 496, 521, and 538. Residues 548–612 (GSHPLPPKIQ…SADAPNQAEP (65 aa)) are disordered. The Phorbol-ester/DAG-type zinc-finger motif lies at 840-891 (KHSFQDTQFQNPTWCDYCKKKVWTKAASQCMFCAYVCHKKCQEKCLAETSVC). Positions 955 to 999 (RLSEPGTDLVEPSPKHTPNTSDNEGSDTEVCGPNSPSKRGNSTGI) are disordered. Phosphoserine is present on residues serine 967 and serine 980. The segment covering 988–998 (NSPSKRGNSTG) has biased composition (polar residues). Positions 1028 to 1063 (PTEERIQKLEFMLDKLQNEIDQELEHNNSLVREEKE) form a coiled coil. A compositionally biased stretch (polar residues) spans 1132–1144 (SQLIDSQPFSSIS). The tract at residues 1132 to 1154 (SQLIDSQPFSSISDDLFGPSESV) is disordered.

In terms of assembly, interacts with MSN. As to quaternary structure, (Microbial infection) Interacts with HIV-1 Gag polyprotein p55.

It is found in the endoplasmic reticulum membrane. Its function is as follows. Molecular tethering protein that connects endoplasmic reticulum and mitochondria membranes. PDZD8-dependent endoplasmic reticulum-mitochondria membrane tethering is essential for endoplasmic reticulum-mitochondria Ca(2+) transfer. In neurons, involved in the regulation of dendritic Ca(2+) dynamics by regulating mitochondrial Ca(2+) uptake in neurons. Plays an indirect role in the regulation of cell morphology and cytoskeletal organization. May inhibit herpes simplex virus 1 infection at an early stage. The chain is PDZ domain-containing protein 8 from Homo sapiens (Human).